The chain runs to 61 residues: Ferredoxin-2 (61 aa).

4Fe-4S ferredoxin-type domains are found at residues 2-27 and 28-61; these read HRITEECTYCAACEPECPVNAISAGD and EIYIVDESVCTDCEGYYDEPACVAVCPVDCIIKV. Residues Cys-8, Cys-11, Cys-14, Cys-18, Cys-37, Cys-40, Cys-49, and Cys-53 each contribute to the [4Fe-4S] cluster site.

It depends on [4Fe-4S] cluster as a cofactor.

In terms of biological role, ferredoxins are iron-sulfur proteins that transfer electrons in a wide variety of metabolic reactions. The sequence is that of Ferredoxin-2 from Chlorobium limicola.